Here is a 175-residue protein sequence, read N- to C-terminus: uncharacterized protein (175 aa).

The region spanning 10–157 (LFELYAELIH…AERLFRDLVT (148 aa)) is the HTH marR-type domain. Positions 68–91 (VTSIAEKMNTTKATVSRISTKLLG) form a DNA-binding region, H-T-H motif.

The protein resides in the cytoplasm. This is an uncharacterized protein from Bacillus subtilis (strain 168).